A 291-amino-acid chain; its full sequence is Ubiquinone biosynthesis protein COQ4, mitochondrial (291 aa).

Residues 1–37 (MLGRRSVSLLRGLTELPVSSRAHTALRALSVPQTRRN) constitute a mitochondrion transit peptide. 4 residues coordinate Zn(2+): His169, Asp170, His173, and Glu185. Basic and acidic residues predominate over residues 271 to 283 (PLNEAKEAAERRS). The tract at residues 271–291 (PLNEAKEAAERRSKTTQNQIY) is disordered.

The protein belongs to the COQ4 family. As to quaternary structure, component of a multi-subunit COQ enzyme complex, composed of at least COQ3, COQ4, COQ5, COQ6, COQ7 and COQ9. Zn(2+) serves as cofactor.

Its subcellular location is the mitochondrion inner membrane. It catalyses the reaction a 4-hydroxy-3-methoxy-5-(all-trans-polyprenyl)benzoate + H(+) = a 2-methoxy-6-(all-trans-polyprenyl)phenol + CO2. It functions in the pathway cofactor biosynthesis; ubiquinone biosynthesis. Lyase that catalyzes the C1-decarboxylation of 4-hydroxy-3-methoxy-5-(all-trans-polyprenyl)benzoic acid into 2-methoxy-6-(all-trans-polyprenyl)phenol during ubiquinone biosynthesis. The sequence is that of Ubiquinone biosynthesis protein COQ4, mitochondrial from Coprinopsis cinerea (strain Okayama-7 / 130 / ATCC MYA-4618 / FGSC 9003) (Inky cap fungus).